Here is a 117-residue protein sequence, read N- to C-terminus: Photosystem II reaction center Psb28 protein (117 aa).

The protein belongs to the Psb28 family. As to quaternary structure, part of the photosystem II complex.

The protein resides in the cellular thylakoid membrane. The sequence is that of Photosystem II reaction center Psb28 protein from Prochlorococcus marinus (strain MIT 9301).